A 538-amino-acid chain; its full sequence is Putative outer membrane porin BglH (538 aa).

The N-terminal stretch at 1–25 is a signal peptide; the sequence is MFRQNLITSAILLMAPLAFSAQSLA. The segment at 52–82 is disordered; sequence KDEEKKKYTPATVNRSVSTNDQGYAANPFPT. Positions 62 to 73 are enriched in polar residues; sequence ATVNRSVSTNDQ.

It belongs to the porin LamB (TC 1.B.3) family.

The protein resides in the cell outer membrane. In terms of biological role, may be a sugar porin with a broad carbohydrate specificity. The polypeptide is Putative outer membrane porin BglH (bglH) (Shigella flexneri).